A 130-amino-acid chain; its full sequence is MMRQSLQAVLPEISGNKTSLLRKSVCSDLLTLFNSPHSTLPSLLVSGMPEWQVHNPSDKHLQSWYCRQLRSALLFHEPRIAALQVNLKEAYCHTLAISLEIMLYHDDEPLTFDLVWDNGGWRSATLENVS.

Belongs to the GpW/Gp25 family. IraD subfamily. As to quaternary structure, interacts with RssB.

Its subcellular location is the cytoplasm. Inhibits RpoS proteolysis by regulating RssB activity, thereby increasing the stability of the sigma stress factor RpoS during oxidative stress. Its effect on RpoS stability is due to its interaction with RssB, which probably blocks the interaction of RssB with RpoS, and the consequent delivery of the RssB-RpoS complex to the ClpXP protein degradation pathway. The protein is Anti-adapter protein IraD of Escherichia coli O157:H7.